We begin with the raw amino-acid sequence, 515 residues long: Bifunctional purine biosynthesis protein PurH (515 aa).

Residues Met-1–Val-144 form the MGS-like domain.

The protein belongs to the PurH family.

It catalyses the reaction (6R)-10-formyltetrahydrofolate + 5-amino-1-(5-phospho-beta-D-ribosyl)imidazole-4-carboxamide = 5-formamido-1-(5-phospho-D-ribosyl)imidazole-4-carboxamide + (6S)-5,6,7,8-tetrahydrofolate. It carries out the reaction IMP + H2O = 5-formamido-1-(5-phospho-D-ribosyl)imidazole-4-carboxamide. The protein operates within purine metabolism; IMP biosynthesis via de novo pathway; 5-formamido-1-(5-phospho-D-ribosyl)imidazole-4-carboxamide from 5-amino-1-(5-phospho-D-ribosyl)imidazole-4-carboxamide (10-formyl THF route): step 1/1. Its pathway is purine metabolism; IMP biosynthesis via de novo pathway; IMP from 5-formamido-1-(5-phospho-D-ribosyl)imidazole-4-carboxamide: step 1/1. This chain is Bifunctional purine biosynthesis protein PurH, found in Persephonella marina (strain DSM 14350 / EX-H1).